We begin with the raw amino-acid sequence, 150 residues long: FCS-Like Zinc finger 15 (150 aa).

Positions 12–28 (NNNNNNNNNNNNNNNKN) are enriched in low complexity. Residues 12-31 (NNNNNNNNNNNNNNNKNPLS) form a disordered region. The FLZ-type zinc-finger motif lies at 67–111 (GFLEHCFLCRRKLLPAKDIYMYKGDRAFCSVECRSKQMIMDEEES). The tract at residues 129-150 (SPATAPSRYRRDPRNQAGGFAY) is disordered.

The protein belongs to the FLZ family. As to quaternary structure, interacts with KIN10 and KIN11 via its FLZ-type zinc finger domain. Interacts with KINB1 and KINB3 via its N-terminal part. Forms homodimer and heterodimer with FLZ1, FLZ2 and FLZ7 in vitro.

Its subcellular location is the cytoplasm. It localises to the P-body. Its function is as follows. May act as an adapter to facilitate the interaction of SnRK1 complex with effector proteins, conferring tissue- and stimulus-type specific differences in the SnRK1 regulation pathway. In Arabidopsis thaliana (Mouse-ear cress), this protein is FCS-Like Zinc finger 15.